Consider the following 187-residue polypeptide: Large ribosomal subunit protein eL18x (187 aa).

Residues 150–187 (HFGPAPGVPHSNTKPYVRHKGRKFEKARGKRKSRGFKV) form a disordered region. Residues 165–187 (YVRHKGRKFEKARGKRKSRGFKV) show a composition bias toward basic residues.

The protein belongs to the eukaryotic ribosomal protein eL18 family.

The chain is Large ribosomal subunit protein eL18x (RPL18C) from Arabidopsis thaliana (Mouse-ear cress).